Here is a 236-residue protein sequence, read N- to C-terminus: Small ribosomal subunit protein uS2 (236 aa).

The protein belongs to the universal ribosomal protein uS2 family.

This is Small ribosomal subunit protein uS2 from Brevibacillus brevis (strain 47 / JCM 6285 / NBRC 100599).